The primary structure comprises 302 residues: Uricase (302 aa).

At Ser-2 the chain carries N-acetylserine. Residues Lys-11 and Thr-58 each act as charge relay system in the active site. Positions 58, 59, 160, 177, 228, 229, and 255 each coordinate 5-hydroxyisourate. An O2-binding site is contributed by Thr-58. Thr-58, Asp-59, Phe-160, Arg-177, Val-228, Gln-229, and Asn-255 together coordinate urate. Asn-255 contributes to the O2 binding site. His-257 serves as the catalytic Charge relay system. A Microbody targeting signal motif is present at residues 300–302 (SKL).

It belongs to the uricase family. In terms of assembly, homotetramer.

It localises to the peroxisome. The enzyme catalyses urate + O2 + H2O = 5-hydroxyisourate + H2O2. It participates in purine metabolism; urate degradation; (S)-allantoin from urate: step 1/3. 8-Azaxanthine is one of the most potent competitive inhibitors of uricase activity. Hypoxanthine has only a small inhibitor effect, and caffeine has no effect at all. Azide not only competes with dioxygen but also competes with the substrate for its enzymatic site. Urate oxidase is a cofactorless enzyme involved in the metabolism of purines. Catalyzes, in the presence of molecular oxygen, the hydroxylation of uric acid to metastable 5-hydroxyisourate (5-HIU) which is further degraded to allantoin. The protein is Uricase of Aspergillus flavus.